Consider the following 258-residue polypeptide: 5'-nucleotidase SurE (258 aa).

4 residues coordinate a divalent metal cation: D8, D9, S40, and N93.

Belongs to the SurE nucleotidase family. It depends on a divalent metal cation as a cofactor.

The protein localises to the cytoplasm. The enzyme catalyses a ribonucleoside 5'-phosphate + H2O = a ribonucleoside + phosphate. Its function is as follows. Nucleotidase that shows phosphatase activity on nucleoside 5'-monophosphates. This Afipia carboxidovorans (strain ATCC 49405 / DSM 1227 / KCTC 32145 / OM5) (Oligotropha carboxidovorans) protein is 5'-nucleotidase SurE.